The sequence spans 85 residues: NAD(P)H-quinone oxidoreductase subunit O (85 aa).

The protein belongs to the complex I NdhO subunit family. In terms of assembly, NDH-1 can be composed of about 15 different subunits; different subcomplexes with different compositions have been identified which probably have different functions.

The protein localises to the cellular thylakoid membrane. It carries out the reaction a plastoquinone + NADH + (n+1) H(+)(in) = a plastoquinol + NAD(+) + n H(+)(out). The enzyme catalyses a plastoquinone + NADPH + (n+1) H(+)(in) = a plastoquinol + NADP(+) + n H(+)(out). NDH-1 shuttles electrons from an unknown electron donor, via FMN and iron-sulfur (Fe-S) centers, to quinones in the respiratory and/or the photosynthetic chain. The immediate electron acceptor for the enzyme in this species is believed to be plastoquinone. Couples the redox reaction to proton translocation, and thus conserves the redox energy in a proton gradient. Cyanobacterial NDH-1 also plays a role in inorganic carbon-concentration. This is NAD(P)H-quinone oxidoreductase subunit O from Synechococcus sp. (strain CC9311).